We begin with the raw amino-acid sequence, 427 residues long: Serine hydroxymethyltransferase (427 aa).

(6S)-5,6,7,8-tetrahydrofolate-binding positions include Leu-122 and 126–128 (GHL). Lys-231 is subject to N6-(pyridoxal phosphate)lysine. 355-357 (SPF) provides a ligand contact to (6S)-5,6,7,8-tetrahydrofolate.

The protein belongs to the SHMT family. In terms of assembly, homodimer. Pyridoxal 5'-phosphate serves as cofactor.

The protein resides in the cytoplasm. It carries out the reaction (6R)-5,10-methylene-5,6,7,8-tetrahydrofolate + glycine + H2O = (6S)-5,6,7,8-tetrahydrofolate + L-serine. Its pathway is one-carbon metabolism; tetrahydrofolate interconversion. It functions in the pathway amino-acid biosynthesis; glycine biosynthesis; glycine from L-serine: step 1/1. In terms of biological role, catalyzes the reversible interconversion of serine and glycine with tetrahydrofolate (THF) serving as the one-carbon carrier. This reaction serves as the major source of one-carbon groups required for the biosynthesis of purines, thymidylate, methionine, and other important biomolecules. Also exhibits THF-independent aldolase activity toward beta-hydroxyamino acids, producing glycine and aldehydes, via a retro-aldol mechanism. This Synechococcus sp. (strain ATCC 27144 / PCC 6301 / SAUG 1402/1) (Anacystis nidulans) protein is Serine hydroxymethyltransferase.